The primary structure comprises 150 residues: CCAAT/enhancer-binding protein gamma (150 aa).

Lys3 participates in a covalent cross-link: Glycyl lysine isopeptide (Lys-Gly) (interchain with G-Cter in SUMO2). The segment at 27-94 (GLQQVPQLVP…QKAQDTLQRV (68 aa)) is disordered. Residues 28 to 37 (LQQVPQLVPA) are compositionally biased toward low complexity. Residues 56-72 (SPMDRNSDEYRQRRERN) show a composition bias toward basic and acidic residues. The bZIP domain maps to 62–125 (SDEYRQRRER…SVLKDLFLEH (64 aa)). The interval 66–93 (RQRRERNNMAVKKSRLKSKQKAQDTLQR) is basic motif. The tract at residues 97-118 (LKEENERLEAKIKLLTKELSVL) is leucine-zipper. Positions 129 to 150 (LADNVQPISTETTATNSDNPGQ) are disordered. The span at 134 to 150 (QPISTETTATNSDNPGQ) shows a compositional bias: polar residues.

The protein belongs to the bZIP family. C/EBP subfamily. In terms of assembly, binds DNA as a dimer and can form stable heterodimers with CEBPA. Can form stable heterodimers with CEBPB. Interacts with ZNF638; this interaction increases transcriptional activation. Ubiquitous.

It is found in the nucleus. Its function is as follows. Transcription factor that binds to the promoter and the enhancer regions of target genes. Binds to the promoter and the enhancer of the immunoglobulin heavy chain. Binds to GPE1, a cis-acting element in the G-CSF gene promoter. Binds to the enhancer element PRE-I (positive regulatory element-I) of the IL-4 gene. Binds to the promoter and the enhancer of the alpha-1-fetoprotein gene. The chain is CCAAT/enhancer-binding protein gamma (Cebpg) from Mus musculus (Mouse).